The sequence spans 523 residues: 2-isopropylmalate synthase (523 aa).

One can recognise a Pyruvate carboxyltransferase domain in the interval 5–267; sequence VIIFDTTLRD…HTAINHQEIW (263 aa). Asp14, His202, His204, and Asn238 together coordinate Mn(2+). The tract at residues 392–523 is regulatory domain; the sequence is RLDYFSVQSG…QHNENNKETV (132 aa).

This sequence belongs to the alpha-IPM synthase/homocitrate synthase family. LeuA type 1 subfamily. In terms of assembly, homodimer. Mn(2+) serves as cofactor.

The protein resides in the cytoplasm. It carries out the reaction 3-methyl-2-oxobutanoate + acetyl-CoA + H2O = (2S)-2-isopropylmalate + CoA + H(+). It participates in amino-acid biosynthesis; L-leucine biosynthesis; L-leucine from 3-methyl-2-oxobutanoate: step 1/4. Functionally, catalyzes the condensation of the acetyl group of acetyl-CoA with 3-methyl-2-oxobutanoate (2-ketoisovalerate) to form 3-carboxy-3-hydroxy-4-methylpentanoate (2-isopropylmalate). The protein is 2-isopropylmalate synthase of Shigella flexneri serotype 5b (strain 8401).